A 443-amino-acid chain; its full sequence is 26S proteasome regulatory subunit rpn501 (443 aa).

S209 is modified (phosphoserine). A PCI domain is found at 230-402; that stretch reads DVCKYYRAVY…QVISFKKSQN (173 aa).

The protein belongs to the proteasome subunit p55 family.

Its subcellular location is the nucleus. Acts as a regulatory subunit of the 26S proteasome which is involved in the ATP-dependent degradation of ubiquitinated proteins. Required for proper proteasome assembly. The protein is 26S proteasome regulatory subunit rpn501 (rpn501) of Schizosaccharomyces pombe (strain 972 / ATCC 24843) (Fission yeast).